Here is an 85-residue protein sequence, read N- to C-terminus: Small ribosomal subunit protein bS20 (85 aa).

Residues 1–24 are disordered; the sequence is MANIKSAIKRAKLSEERRSHNASI.

It belongs to the bacterial ribosomal protein bS20 family.

Binds directly to 16S ribosomal RNA. The chain is Small ribosomal subunit protein bS20 from Bacillus mycoides (strain KBAB4) (Bacillus weihenstephanensis).